Here is a 768-residue protein sequence, read N- to C-terminus: DNA ligase (768 aa).

Residues 30–34 (DAEYD), 79–80 (SL), and Glu-190 each bind NAD(+). The active-site N6-AMP-lysine intermediate is Lys-192. NAD(+) is bound by residues Arg-213, Glu-250, Lys-367, and Lys-391. Positions 485, 488, 503, and 509 each coordinate Zn(2+). The BRCT domain occupies 678–767 (AAEQPLSGLS…IPPEIQARMQ (90 aa)).

It belongs to the NAD-dependent DNA ligase family. LigA subfamily. Requires Mg(2+) as cofactor. Mn(2+) is required as a cofactor.

It carries out the reaction NAD(+) + (deoxyribonucleotide)n-3'-hydroxyl + 5'-phospho-(deoxyribonucleotide)m = (deoxyribonucleotide)n+m + AMP + beta-nicotinamide D-nucleotide.. In terms of biological role, DNA ligase that catalyzes the formation of phosphodiester linkages between 5'-phosphoryl and 3'-hydroxyl groups in double-stranded DNA using NAD as a coenzyme and as the energy source for the reaction. It is essential for DNA replication and repair of damaged DNA. This Magnetococcus marinus (strain ATCC BAA-1437 / JCM 17883 / MC-1) protein is DNA ligase.